We begin with the raw amino-acid sequence, 615 residues long: Medium-chain acyl-CoA ligase ACSF2, mitochondrial (615 aa).

The transit peptide at 1 to 49 (MAVYLGMLRLGRLCVASLGARGPRTPLSRPWPNSKLQGVRAFSSGMVDC) directs the protein to the mitochondrion. The residue at position 179 (lysine 179) is an N6-acetyllysine. Residue lysine 182 is modified to N6-acetyllysine; alternate. Residue lysine 182 is modified to N6-succinyllysine; alternate. Lysine 199 carries the post-translational modification N6-acetyllysine. 263-271 (TSGTTGNPK) is a binding site for ATP. Lysine 340 and lysine 398 each carry N6-acetyllysine. Lysine 478 carries the post-translational modification N6-succinyllysine. The ATP site is built by aspartate 493 and arginine 508. An N6-acetyllysine modification is found at lysine 510. N6-acetyllysine; alternate is present on residues lysine 544 and lysine 570. Residues lysine 544 and lysine 570 each carry the N6-succinyllysine; alternate modification. Lysine 599 contacts ATP. Lysine 599 bears the N6-succinyllysine mark.

This sequence belongs to the ATP-dependent AMP-binding enzyme family.

Its subcellular location is the mitochondrion. It carries out the reaction a medium-chain fatty acid + ATP + CoA = a medium-chain fatty acyl-CoA + AMP + diphosphate. It catalyses the reaction octanoate + ATP + CoA = octanoyl-CoA + AMP + diphosphate. Acyl-CoA synthases catalyze the initial reaction in fatty acid metabolism, by forming a thioester with CoA. Has some preference toward medium-chain substrates. Plays a role in adipocyte differentiation. In Rattus norvegicus (Rat), this protein is Medium-chain acyl-CoA ligase ACSF2, mitochondrial.